Reading from the N-terminus, the 286-residue chain is Beta-lactamase SHV-46 (286 aa).

A signal peptide spans 1-21 (MRYIRLCIISLLATLPLAVHA). S66 functions as the Acyl-ester intermediate in the catalytic mechanism. A disulfide bridge links C73 with C119. Catalysis depends on E164, which acts as the Proton acceptor. 230 to 232 (KTG) is a substrate binding site.

This sequence belongs to the class-A beta-lactamase family.

It carries out the reaction a beta-lactam + H2O = a substituted beta-amino acid. This chain is Beta-lactamase SHV-46 (bla), found in Klebsiella oxytoca.